Reading from the N-terminus, the 527-residue chain is MNVSVTKRRKKKKKKKSEKEKDKYLDEDERRRRKEEKKRKREKEQCDSEGETEVFESIRKDIEATDRPVRTCRTHPENESTPLQQLLEYFLRQLQRKDPNGFFAFPVTDQIAPGYFMIIKNPMDFSTMKEKISQDEYKSVTEFKADFKLMCDNAMTYNRPETVYYKLAKKLLHTGFKMMSKAALLGNEVTTTEEPIPEIIMPTAAEVVKKSKKPSKDMFRVMEEDQSSIFEPEGNACSLTDSTAEEHVLALVEHAADEARDKLNQYFPNCRIGYLKKNTDGTLFYTVVNGDPDNEEDTHLVDLSSLSSKLLPSFTTLGFKEDRRHKVTFLNSTGTALSLQNNTLFTNLKPDQIELMYAGYGDDTGIQCALSLQEFVKDSGSFAKRMVNDLLDQITGGDHSRTIYQIKQMTGSEREGCSNSVLDFMTLKSYSDVSLDMSMLSSLDKVKKELEHEDSHLNLDDASKLLPDFHDVHNDRGGSRPSSSSSMSNNSERDHHLGSPSRISVGEQQDIHDPYEFLQSPETDNQN.

Over residues M1–K16 the composition is skewed to basic residues. Residues M1–V54 are disordered. Residues S17–R30 are compositionally biased toward basic and acidic residues. Residues R31–R41 show a composition bias toward basic residues. A Bromo domain is found at N78–A182. The segment at T156 to N158 is histone H4K5ac H4K8ac and histone H4K5bu H4K8bu binding. Residues D468 to G478 show a composition bias toward basic and acidic residues. Positions D468–N527 are disordered. The span at S479–N490 shows a compositional bias: low complexity.

Binds acetylated histones H3 and H4. Binds butyrylated histone H4.

Its subcellular location is the nucleus. Its function is as follows. Plays a role in chromatin remodeling and regulation of transcription. Acts as a chromatin reader that recognizes and binds acylated histones: binds histones that are acetylated and/or butyrylated. In Xenopus laevis (African clawed frog), this protein is Bromodomain-containing protein 9 (brd9).